The sequence spans 126 residues: Histone H2B type 1-B (126 aa).

A compositionally biased stretch (low complexity) spans Met-1–Lys-12. Residues Met-1–Lys-35 are disordered. Pro-2 carries the N-acetylproline modification. Glu-3 carries the ADP-ribosyl glutamic acid modification. Lys-6 carries the N6-(2-hydroxyisobutyryl)lysine; alternate modification. Residue Lys-6 is modified to N6-(beta-hydroxybutyryl)lysine; alternate. Position 6 is an N6-acetyllysine; alternate (Lys-6). At Lys-6 the chain carries N6-butyryllysine; alternate. Residue Lys-6 is modified to N6-crotonyllysine; alternate. Lys-6 is modified (N6-lactoyllysine; alternate). Lys-6 participates in a covalent cross-link: Glycyl lysine isopeptide (Lys-Gly) (interchain with G-Cter in SUMO2); alternate. Ser-7 bears the ADP-ribosylserine mark. Lys-12 is subject to N6-(beta-hydroxybutyryl)lysine; alternate. 2 positions are modified to N6-acetyllysine; alternate: Lys-12 and Lys-13. 2 positions are modified to N6-crotonyllysine; alternate: Lys-12 and Lys-13. Lys-12 carries the post-translational modification N6-lactoyllysine; alternate. N6-(2-hydroxyisobutyryl)lysine; alternate is present on Lys-13. Ser-15 is subject to Phosphoserine; by STK4/MST1. Residues Lys-16, Lys-17, Lys-21, and Lys-24 each carry the N6-acetyllysine; alternate modification. N6-crotonyllysine; alternate occurs at positions 16, 17, 21, and 24. 4 positions are modified to N6-lactoyllysine; alternate: Lys-16, Lys-17, Lys-21, and Lys-24. N6-(beta-hydroxybutyryl)lysine; alternate is present on residues Lys-17 and Lys-21. Lys-17 carries the post-translational modification N6-glutaryllysine; alternate. An N6-(2-hydroxyisobutyryl)lysine; alternate mark is found at Lys-21 and Lys-24. An N6-butyryllysine; alternate modification is found at Lys-21. Lys-21 is covalently cross-linked (Glycyl lysine isopeptide (Lys-Gly) (interchain with G-Cter in SUMO2); alternate). Lys-25 carries the N6-(2-hydroxyisobutyryl)lysine modification. At Lys-35 the chain carries N6-(2-hydroxyisobutyryl)lysine; alternate. An N6-(beta-hydroxybutyryl)lysine; alternate modification is found at Lys-35. Residue Lys-35 is modified to N6-crotonyllysine; alternate. An N6-glutaryllysine; alternate modification is found at Lys-35. N6-succinyllysine; alternate is present on Lys-35. Residue Lys-35 forms a Glycyl lysine isopeptide (Lys-Gly) (interchain with G-Cter in ubiquitin); alternate linkage. At Glu-36 the chain carries PolyADP-ribosyl glutamic acid. Phosphoserine; by AMPK is present on Ser-37. An N6-(2-hydroxyisobutyryl)lysine; alternate mark is found at Lys-44, Lys-47, and Lys-58. Lys-44 is subject to N6-lactoyllysine; alternate. N6-glutaryllysine; alternate occurs at positions 44 and 47. Position 47 is an N6-methyllysine; alternate (Lys-47). At Lys-58 the chain carries N6,N6-dimethyllysine; alternate. Arg-80 is subject to Dimethylated arginine. The residue at position 86 (Lys-86) is an N6-(2-hydroxyisobutyryl)lysine; alternate. The residue at position 86 (Lys-86) is an N6-(beta-hydroxybutyryl)lysine; alternate. Lys-86 bears the N6-acetyllysine; alternate mark. N6-lactoyllysine; alternate is present on Lys-86. An N6,N6,N6-trimethyllysine; alternate modification is found at Lys-86. Arg-87 and Arg-93 each carry omega-N-methylarginine. An N6-(2-hydroxyisobutyryl)lysine; alternate modification is found at Lys-109. Lys-109 bears the N6-lactoyllysine; alternate mark. Lys-109 bears the N6-glutaryllysine; alternate mark. At Lys-109 the chain carries N6-methyllysine; alternate. A glycan (O-linked (GlcNAc) serine) is linked at Ser-113. Thr-116 carries the post-translational modification Phosphothreonine. 2 positions are modified to N6-(2-hydroxyisobutyryl)lysine; alternate: Lys-117 and Lys-121. 2 positions are modified to N6-(beta-hydroxybutyryl)lysine; alternate: Lys-117 and Lys-121. Residues Lys-117 and Lys-121 each carry the N6-lactoyllysine; alternate modification. An N6-glutaryllysine; alternate mark is found at Lys-117 and Lys-121. Residues Lys-117 and Lys-121 each carry the N6-succinyllysine; alternate modification. N6-malonyllysine; alternate is present on Lys-117. Position 117 is an N6-methylated lysine; alternate (Lys-117). Lys-121 participates in a covalent cross-link: Glycyl lysine isopeptide (Lys-Gly) (interchain with G-Cter in ubiquitin); alternate.

Belongs to the histone H2B family. As to quaternary structure, the nucleosome is a histone octamer containing two molecules each of H2A, H2B, H3 and H4 assembled in one H3-H4 heterotetramer and two H2A-H2B heterodimers. The octamer wraps approximately 147 bp of DNA. Post-translationally, monoubiquitination at Lys-35 (H2BK34Ub) by the MSL1/MSL2 dimer is required for histone H3 'Lys-4' (H3K4me) and 'Lys-79' (H3K79me) methylation and transcription activation at specific gene loci, such as HOXA9 and MEIS1 loci. Similarly, monoubiquitination at Lys-121 (H2BK120Ub) by the RNF20/40 complex gives a specific tag for epigenetic transcriptional activation and is also prerequisite for histone H3 'Lys-4' and 'Lys-79' methylation. It also functions cooperatively with the FACT dimer to stimulate elongation by RNA polymerase II. H2BK120Ub also acts as a regulator of mRNA splicing: deubiquitination by USP49 is required for efficient cotranscriptional splicing of a large set of exons. Phosphorylation at Ser-37 (H2BS36ph) by AMPK in response to stress promotes transcription. Phosphorylated on Ser-15 (H2BS14ph) by STK4/MST1 during apoptosis; which facilitates apoptotic chromatin condensation. Also phosphorylated on Ser-15 in response to DNA double strand breaks (DSBs), and in correlation with somatic hypermutation and immunoglobulin class-switch recombination. In terms of processing, glcNAcylation at Ser-113 promotes monoubiquitination of Lys-121. It fluctuates in response to extracellular glucose, and associates with transcribed genes. Post-translationally, ADP-ribosylated by PARP1 or PARP2 on Ser-7 (H2BS6ADPr) in response to DNA damage. H2BS6ADPr promotes recruitment of CHD1L. Mono-ADP-ribosylated on Glu-3 (H2BE2ADPr) by PARP3 in response to single-strand breaks. Poly ADP-ribosylation on Glu-36 (H2BE35ADPr) by PARP1 regulates adipogenesis: it inhibits phosphorylation at Ser-37 (H2BS36ph), thereby blocking expression of pro-adipogenetic genes. Crotonylation (Kcr) is specifically present in male germ cells and marks testis-specific genes in post-meiotic cells, including X-linked genes that escape sex chromosome inactivation in haploid cells. Crotonylation marks active promoters and enhancers and confers resistance to transcriptional repressors. It is also associated with post-meiotically activated genes on autosomes. In terms of processing, lactylated in macrophages by EP300/P300 by using lactoyl-CoA directly derived from endogenous or exogenous lactate, leading to stimulates gene transcription.

It localises to the nucleus. The protein resides in the chromosome. Its function is as follows. Core component of nucleosome. Nucleosomes wrap and compact DNA into chromatin, limiting DNA accessibility to the cellular machineries which require DNA as a template. Histones thereby play a central role in transcription regulation, DNA repair, DNA replication and chromosomal stability. DNA accessibility is regulated via a complex set of post-translational modifications of histones, also called histone code, and nucleosome remodeling. The polypeptide is Histone H2B type 1-B (Homo sapiens (Human)).